Consider the following 276-residue polypeptide: Cholesterol 25-hydroxylase-like protein 1, member 2 (276 aa).

Asparagine 30 carries an N-linked (GlcNAc...) asparagine glycan. Helical transmembrane passes span 39–59 (LFPV…YLSC), 90–110 (GVTL…QWMW), and 126–146 (LVGG…IWHF). Residues 134-265 (LLLFDLQYFI…FSHWDKMFGT (132 aa)) enclose the Fatty acid hydroxylase domain. Residues 144-148 (WHFLH) carry the Histidine box-1 motif. Residues 159 to 163 (HAIHH) carry the Histidine box-2 motif. N-linked (GlcNAc...) asparagine glycosylation is present at asparagine 164. 2 helical membrane passes run 175–195 (CLGG…PVLL) and 199–219 (LLTT…DHCG). The short motif at 240–246 (KHDVHHQ) is the Histidine box-3 element.

The protein belongs to the sterol desaturase family. Fe cation serves as cofactor.

The protein localises to the endoplasmic reticulum membrane. Its function is as follows. May catalyze the formation of 25-hydroxycholesterol from cholesterol. This is Cholesterol 25-hydroxylase-like protein 1, member 2 from Danio rerio (Zebrafish).